Reading from the N-terminus, the 105-residue chain is MRGGGNMQQMMKQMQKMQKKMAQEQEKLKEERIVGTAGGGMVAVTVTGHKEVVDVEIKEEAVDPDDIEMLQDLVLAATNEAMNKADELTQERLGKHTQGLNIPGM.

The disordered stretch occupies residues 1–33 (MRGGGNMQQMMKQMQKMQKKMAQEQEKLKEERI). Positions 7–16 (MQQMMKQMQK) are enriched in low complexity. The segment covering 21-33 (MAQEQEKLKEERI) has biased composition (basic and acidic residues).

Belongs to the YbaB/EbfC family. Homodimer.

The protein resides in the cytoplasm. The protein localises to the nucleoid. In terms of biological role, binds to DNA and alters its conformation. May be involved in regulation of gene expression, nucleoid organization and DNA protection. The chain is Nucleoid-associated protein MW0434 from Staphylococcus aureus (strain MW2).